Here is a 148-residue protein sequence, read N- to C-terminus: Transcriptional repressor NrdR (148 aa).

The segment at 3–32 (CPKCSSEESKVVDSRQAEDAIRRRRVCESC) is a zinc-finger region. The ATP-cone domain occupies 47–137 (LLVIKKDDKR…VYRSFKDVSE (91 aa)).

It belongs to the NrdR family. Requires Zn(2+) as cofactor.

Its function is as follows. Negatively regulates transcription of bacterial ribonucleotide reductase nrd genes and operons by binding to NrdR-boxes. The chain is Transcriptional repressor NrdR from Lactococcus lactis subsp. lactis (strain IL1403) (Streptococcus lactis).